The following is a 407-amino-acid chain: Lysosome-associated membrane glycoprotein 1 (407 aa).

The N-terminal stretch at 1–21 (MAAPGAPRSLLLLLLAGLAHG) is a signal peptide. Residues 22–189 (ASALFVVKDS…SKEETRCTQD (168 aa)) form a first lumenal domain region. Residues 22 to 371 (ASALFVVKDS…VEECMQDGNN (350 aa)) are Lumenal-facing. Asparagine 32, asparagine 40, asparagine 57, asparagine 72, asparagine 79, asparagine 98, asparagine 102, asparagine 116, asparagine 125, asparagine 145, asparagine 160, and asparagine 178 each carry an N-linked (GlcNAc...) asparagine glycan. The cysteines at positions 36 and 75 are disulfide-linked. A disulfide bridge connects residues cysteine 150 and cysteine 186. A disordered region spans residues 183–206 (ETRCTQDGPSPTTVPPSPSPPLVP). Residues 190–219 (GPSPTTVPPSPSPPLVPTNPTVIKYNVTGE) form a hinge region. Residues 194–206 (TTVPPSPSPPLVP) are compositionally biased toward pro residues. Asparagine 215, asparagine 220, asparagine 233, asparagine 241, asparagine 253, asparagine 283, asparagine 297, asparagine 304, and asparagine 312 each carry an N-linked (GlcNAc...) asparagine glycan. Residues 220–371 (NGTCLLASMA…VEECMQDGNN (152 aa)) are second lumenal domain. A disulfide bond links cysteine 223 and cysteine 260. A disulfide bridge links cysteine 328 with cysteine 365. The chain crosses the membrane as a helical span at residues 372-395 (MLIPIAVGGALAGLVLIVLIAYLI). Residues 396–407 (GRKRSHAGYQTI) lie on the Cytoplasmic side of the membrane.

This sequence belongs to the LAMP family. Interacts with ABCB9; this interaction strongly stabilizes ABCB9 and protects ABCB9 against lysosomal degradation. Interacts with FURIN. Interacts with TMEM175; inhibiting the proton channel activity of TMEM175. In terms of processing, O- and N-glycosylated; some of the N-glycans attached to LAMP-1 are polylactosaminoglycans.

It localises to the lysosome membrane. The protein localises to the endosome membrane. Its subcellular location is the late endosome membrane. The protein resides in the cell membrane. It is found in the cytolytic granule membrane. Lysosomal membrane glycoprotein which plays an important role in lysosome biogenesis, lysosomal pH regulation, autophagy and cholesterol homeostasis. Acts as an important regulator of lysosomal lumen pH regulation by acting as a direct inhibitor of the proton channel TMEM175, facilitating lysosomal acidification for optimal hydrolase activity. Also plays an important role in NK-cells cytotoxicity. Mechanistically, participates in cytotoxic granule movement to the cell surface and perforin trafficking to the lytic granule. In addition, protects NK-cells from degranulation-associated damage induced by their own cytotoxic granule content. Presents carbohydrate ligands to selectins. The chain is Lysosome-associated membrane glycoprotein 1 (LAMP1) from Cricetulus griseus (Chinese hamster).